The following is a 585-amino-acid chain: Rab GTPase-binding effector protein 2 (585 aa).

The residue at position 2 (Ala2) is an N-acetylalanine. Residues 27 to 183 (QEGAKVEAES…ELIQEIQRRP (157 aa)) are a coiled coil. 3 disordered regions span residues 178–265 (EIQR…ASLV), 381–408 (ENQG…EESL), and 491–515 (EEQS…EEAQ). Residues Ser188, Ser192, Ser198, and Ser202 each carry the phosphoserine modification. Positions 288-540 (NQWEQLQLEG…QAELETSEQV (253 aa)) form a coiled coil. Over residues 491 to 501 (EEQSKAKRQEV) the composition is skewed to basic and acidic residues.

Belongs to the rabaptin family. As to quaternary structure, heterodimer with RABGEF1. The dimer binds RAB5A that has been activated by GTP-binding. Interacts with SDCCAG8; this interaction is important for ciliogenesis regulation. Interacts with RAB4; this interaction may mediate VEGFR2 cell surface expression.

The protein localises to the cytoplasm. The protein resides in the early endosome. Its subcellular location is the cytoskeleton. It localises to the microtubule organizing center. It is found in the centrosome. The protein localises to the cilium basal body. Functionally, plays a role in membrane trafficking and in homotypic early endosome fusion. Participates in arteriogenesis by regulating vascular endothelial growth factor receptor 2/VEGFR2 cell surface expression and endosomal trafficking. By interacting with SDCCAG8, localizes to centrosomes and plays a critical role in ciliogenesis. This chain is Rab GTPase-binding effector protein 2 (RABEP2), found in Bos taurus (Bovine).